Here is a 196-residue protein sequence, read N- to C-terminus: Putative NADH dehydrogenase/NAD(P)H nitroreductase XOO4023 (196 aa).

It belongs to the nitroreductase family. HadB/RutE subfamily. FMN is required as a cofactor.

This is Putative NADH dehydrogenase/NAD(P)H nitroreductase XOO4023 from Xanthomonas oryzae pv. oryzae (strain MAFF 311018).